The sequence spans 795 residues: Phenylalanine--tRNA ligase beta subunit (795 aa).

The tRNA-binding domain occupies 39–148 (AGSFHGVVVG…ADAPIGTDIR (110 aa)). One can recognise a B5 domain in the interval 401-476 (PKRATITLRR…RVYGYNNIPD (76 aa)). Residues D454, D460, E463, and E464 each contribute to the Mg(2+) site. The region spanning 701-794 (SRFPANRRDI…LKERFQASLR (94 aa)) is the FDX-ACB domain.

Belongs to the phenylalanyl-tRNA synthetase beta subunit family. Type 1 subfamily. As to quaternary structure, tetramer of two alpha and two beta subunits. It depends on Mg(2+) as a cofactor.

The protein localises to the cytoplasm. It carries out the reaction tRNA(Phe) + L-phenylalanine + ATP = L-phenylalanyl-tRNA(Phe) + AMP + diphosphate + H(+). The protein is Phenylalanine--tRNA ligase beta subunit of Shigella dysenteriae serotype 1 (strain Sd197).